A 356-amino-acid chain; its full sequence is Ferrochelatase (356 aa).

Fe cation-binding residues include His214 and Glu295.

It belongs to the ferrochelatase family.

It is found in the cytoplasm. The catalysed reaction is heme b + 2 H(+) = protoporphyrin IX + Fe(2+). The protein operates within porphyrin-containing compound metabolism; protoheme biosynthesis; protoheme from protoporphyrin-IX: step 1/1. Catalyzes the ferrous insertion into protoporphyrin IX. This Paraburkholderia phymatum (strain DSM 17167 / CIP 108236 / LMG 21445 / STM815) (Burkholderia phymatum) protein is Ferrochelatase.